The sequence spans 250 residues: Hemocyanin, units C and D (250 aa).

Histidine 1 contributes to the Cu cation binding site. The unit C stretch occupies residues 1-106 (HGSTKWCPSP…RAWIEPVTSA (106 aa)). Cysteines 7 and 18 form a disulfide. The segment at residues 19-21 (CHH) is a cross-link (2'-(S-cysteinyl)-histidine (Cys-His)). 2 residues coordinate Cu cation: histidine 21 and histidine 143. Residues 107-250 (VRIRKNLNDL…DAQDVIYNNH (144 aa)) form a unit D region. Cysteines 149 and 160 form a disulfide. Positions 161 to 163 (CLH) form a cross-link, 2'-(S-cysteinyl)-histidine (Cys-His). Histidine 172 is a binding site for Cu cation.

It belongs to the tyrosinase family. Hemocyanin subfamily. As to quaternary structure, decamers of large identical subunits (390 kDa), each containing 8 globular oxygen-binding functional units. The cofactor is Cu(2+).

Hemocyanins are copper-containing oxygen carriers occurring freely dissolved in the hemolymph of many mollusks and arthropods. The chain is Hemocyanin, units C and D from Sepia officinalis (Common cuttlefish).